The sequence spans 351 residues: Dihydroorotate dehydrogenase (quinone) (351 aa).

FMN is bound by residues 67-71 (AGFDK) and Thr-91. Residue Lys-71 coordinates substrate. 116–120 (NAMGF) contacts substrate. FMN-binding residues include Asn-145 and Asn-178. Residue Asn-178 participates in substrate binding. The Nucleophile role is filled by Ser-181. Asn-183 lines the substrate pocket. Lys-214 and Thr-242 together coordinate FMN. 243 to 244 (NT) contributes to the substrate binding site. Residues Gly-262, Gly-291, and 312-313 (YS) contribute to the FMN site.

Belongs to the dihydroorotate dehydrogenase family. Type 2 subfamily. Monomer. FMN serves as cofactor.

The protein resides in the cell membrane. It carries out the reaction (S)-dihydroorotate + a quinone = orotate + a quinol. It functions in the pathway pyrimidine metabolism; UMP biosynthesis via de novo pathway; orotate from (S)-dihydroorotate (quinone route): step 1/1. In terms of biological role, catalyzes the conversion of dihydroorotate to orotate with quinone as electron acceptor. The sequence is that of Dihydroorotate dehydrogenase (quinone) from Helicobacter pylori (strain P12).